A 196-amino-acid polypeptide reads, in one-letter code: GTP cyclohydrolase-2 (196 aa).

49 to 53 lines the GTP pocket; sequence RVHSE. Residues Cys54, Cys65, and Cys67 each coordinate Zn(2+). Residues Gln70, 92-94, and Thr114 each bind GTP; that span reads EGR. Catalysis depends on Asp126, which acts as the Proton acceptor. Arg128 functions as the Nucleophile in the catalytic mechanism. Thr149 and Lys154 together coordinate GTP.

The protein belongs to the GTP cyclohydrolase II family. Homodimer. Zn(2+) serves as cofactor.

The enzyme catalyses GTP + 4 H2O = 2,5-diamino-6-hydroxy-4-(5-phosphoribosylamino)-pyrimidine + formate + 2 phosphate + 3 H(+). It functions in the pathway cofactor biosynthesis; riboflavin biosynthesis; 5-amino-6-(D-ribitylamino)uracil from GTP: step 1/4. Catalyzes the conversion of GTP to 2,5-diamino-6-ribosylamino-4(3H)-pyrimidinone 5'-phosphate (DARP), formate and pyrophosphate. This Salmonella choleraesuis (strain SC-B67) protein is GTP cyclohydrolase-2.